Reading from the N-terminus, the 72-residue chain is Seed trypsin/chymotrypsin inhibitor IVB (72 aa).

Cystine bridges form between Cys8–Cys61, Cys9–Cys24, Cys12–Cys57, Cys14–Cys22, Cys31–Cys38, Cys35–Cys50, and Cys40–Cys48.

The protein belongs to the Bowman-Birk serine protease inhibitor family. As to expression, seed.

Inhibitor of trypsin and of chymotrypsin. May function as a natural phytochemical defense against predators. This chain is Seed trypsin/chymotrypsin inhibitor IVB, found in Pisum sativum (Garden pea).